The following is a 142-amino-acid chain: Universal stress protein G (142 aa).

The protein belongs to the universal stress protein A family.

The chain is Universal stress protein G (uspG) from Escherichia coli O157:H7.